Reading from the N-terminus, the 407-residue chain is uncharacterized protein (407 aa).

Disordered stretches follow at residues 73 to 93 (SPHS…VHGG) and 116 to 202 (SGSI…IKPS). A run of 5 repeats spans residues 112–116 (GSIRS), 117–121 (GSIRS), 122–126 (GSIRN), 127–131 (GSIRS), and 132–136 (GSVRD). A 5 X 5 AA tandem repeats of G-[S]-[IV]-R-[DNS] region spans residues 112–136 (GSIRSGSIRSGSIRNGSIRSGSVRD). Residues 116 to 132 (SGSIRSGSIRNGSIRSG) show a composition bias toward low complexity. Residues 187–202 (NHYAESEYSEKSIKPS) are compositionally biased toward basic and acidic residues.

The protein belongs to the asfivirus B407L family.

This is an uncharacterized protein from Ornithodoros (relapsing fever ticks).